The following is a 322-amino-acid chain: Ribonuclease Z (322 aa).

His60, His62, Asp64, His65, His140, Asp210, and His270 together coordinate Zn(2+). Catalysis depends on Asp64, which acts as the Proton acceptor.

Belongs to the RNase Z family. As to quaternary structure, homodimer. Zn(2+) serves as cofactor.

It carries out the reaction Endonucleolytic cleavage of RNA, removing extra 3' nucleotides from tRNA precursor, generating 3' termini of tRNAs. A 3'-hydroxy group is left at the tRNA terminus and a 5'-phosphoryl group is left at the trailer molecule.. Functionally, zinc phosphodiesterase, which displays some tRNA 3'-processing endonuclease activity. Probably involved in tRNA maturation, by removing a 3'-trailer from precursor tRNA. This is Ribonuclease Z from Methanococcus aeolicus (strain ATCC BAA-1280 / DSM 17508 / OCM 812 / Nankai-3).